The sequence spans 98 residues: Integration host factor subunit alpha (98 aa).

Residues 54-74 form a disordered region; sequence LRDKASRPGRNPKTGENIPVS.

It belongs to the bacterial histone-like protein family. Heterodimer of an alpha and a beta chain.

In terms of biological role, this protein is one of the two subunits of integration host factor, a specific DNA-binding protein that functions in genetic recombination as well as in transcriptional and translational control. The chain is Integration host factor subunit alpha from Actinobacillus succinogenes (strain ATCC 55618 / DSM 22257 / CCUG 43843 / 130Z).